We begin with the raw amino-acid sequence, 77 residues long: uncharacterized protein (77 aa).

This is an uncharacterized protein from Dictyostelium discoideum (Social amoeba).